Reading from the N-terminus, the 210-residue chain is Putative 3-methyladenine DNA glycosylase (210 aa).

The protein belongs to the DNA glycosylase MPG family.

In Lactobacillus helveticus (strain DPC 4571), this protein is Putative 3-methyladenine DNA glycosylase.